Here is a 461-residue protein sequence, read N- to C-terminus: Protein YIG1 (461 aa).

A disordered region spans residues 58 to 80; it reads SNVGEDGGDVGNYSEEDDDGDEE. The span at 71-80 shows a compositional bias: acidic residues; that stretch reads SEEDDDGDEE.

Its subcellular location is the cytoplasm. The protein resides in the nucleus. In terms of biological role, involved in the regulation of anaerobiotic glycerol metabolism. The sequence is that of Protein YIG1 (YIG1) from Saccharomyces cerevisiae (strain ATCC 204508 / S288c) (Baker's yeast).